The primary structure comprises 274 residues: Urease accessory protein UreD 2 (274 aa).

The protein belongs to the UreD family. UreD, UreF and UreG form a complex that acts as a GTP-hydrolysis-dependent molecular chaperone, activating the urease apoprotein by helping to assemble the nickel containing metallocenter of UreC. The UreE protein probably delivers the nickel.

The protein resides in the cytoplasm. Its function is as follows. Required for maturation of urease via the functional incorporation of the urease nickel metallocenter. The chain is Urease accessory protein UreD 2 from Brucella anthropi (strain ATCC 49188 / DSM 6882 / CCUG 24695 / JCM 21032 / LMG 3331 / NBRC 15819 / NCTC 12168 / Alc 37) (Ochrobactrum anthropi).